The chain runs to 375 residues: Putative glycyl-radical enzyme activating enzyme MJ0021 (375 aa).

The Radical SAM core domain occupies 23–246; the sequence is QCVKGGKLVL…LKVIKEFKGD (224 aa). Positions 38, 42, and 45 each coordinate [4Fe-4S] cluster. S-adenosyl-L-methionine-binding positions include 44–46 and G87; that span reads YCP.

This sequence belongs to the organic radical-activating enzymes family. Requires [4Fe-4S] cluster as cofactor.

It carries out the reaction glycyl-[protein] + reduced [flavodoxin] + S-adenosyl-L-methionine = glycin-2-yl radical-[protein] + semiquinone [flavodoxin] + 5'-deoxyadenosine + L-methionine + H(+). The sequence is that of Putative glycyl-radical enzyme activating enzyme MJ0021 from Methanocaldococcus jannaschii (strain ATCC 43067 / DSM 2661 / JAL-1 / JCM 10045 / NBRC 100440) (Methanococcus jannaschii).